The primary structure comprises 144 residues: uncharacterized protein (144 aa).

Transmembrane regions (helical) follow at residues 16-36, 48-68, 87-107, and 120-140; these read FLIF…GAIF, GFIV…ALII, LLPE…LVLL, and VMSL…WYFG.

The protein localises to the cell membrane. This is an uncharacterized protein from Methanocaldococcus jannaschii (strain ATCC 43067 / DSM 2661 / JAL-1 / JCM 10045 / NBRC 100440) (Methanococcus jannaschii).